Reading from the N-terminus, the 417-residue chain is Serine hydroxymethyltransferase (417 aa).

(6S)-5,6,7,8-tetrahydrofolate-binding positions include leucine 122 and 126-128 (GHL). Lysine 231 is modified (N6-(pyridoxal phosphate)lysine).

Belongs to the SHMT family. As to quaternary structure, homodimer. It depends on pyridoxal 5'-phosphate as a cofactor.

It is found in the cytoplasm. It catalyses the reaction (6R)-5,10-methylene-5,6,7,8-tetrahydrofolate + glycine + H2O = (6S)-5,6,7,8-tetrahydrofolate + L-serine. The protein operates within one-carbon metabolism; tetrahydrofolate interconversion. It functions in the pathway amino-acid biosynthesis; glycine biosynthesis; glycine from L-serine: step 1/1. In terms of biological role, catalyzes the reversible interconversion of serine and glycine with tetrahydrofolate (THF) serving as the one-carbon carrier. This reaction serves as the major source of one-carbon groups required for the biosynthesis of purines, thymidylate, methionine, and other important biomolecules. Also exhibits THF-independent aldolase activity toward beta-hydroxyamino acids, producing glycine and aldehydes, via a retro-aldol mechanism. This is Serine hydroxymethyltransferase from Caldicellulosiruptor saccharolyticus (strain ATCC 43494 / DSM 8903 / Tp8T 6331).